Consider the following 339-residue polypeptide: Flap endonuclease 1 (339 aa).

Positions 1 to 99 (MGVNLKEIVD…VAWEKRKKHK (99 aa)) are N-domain. Mg(2+) contacts are provided by aspartate 29, aspartate 81, glutamate 153, glutamate 155, aspartate 174, aspartate 176, and aspartate 237. An I-domain region spans residues 117–258 (EAIKYAKSLG…TAIEIVKRFG (142 aa)). The interval 329–337 (NQKTLFSFF) is interaction with PCNA.

Belongs to the XPG/RAD2 endonuclease family. FEN1 subfamily. As to quaternary structure, interacts with PCNA. PCNA stimulates the nuclease activity without altering cleavage specificity. The cofactor is Mg(2+).

Functionally, structure-specific nuclease with 5'-flap endonuclease and 5'-3' exonuclease activities involved in DNA replication and repair. During DNA replication, cleaves the 5'-overhanging flap structure that is generated by displacement synthesis when DNA polymerase encounters the 5'-end of a downstream Okazaki fragment. Binds the unpaired 3'-DNA end and kinks the DNA to facilitate 5' cleavage specificity. Cleaves one nucleotide into the double-stranded DNA from the junction in flap DNA, leaving a nick for ligation. Also involved in the base excision repair (BER) pathway. Acts as a genome stabilization factor that prevents flaps from equilibrating into structures that lead to duplications and deletions. Also possesses 5'-3' exonuclease activity on nicked or gapped double-stranded DNA. The protein is Flap endonuclease 1 of Nanoarchaeum equitans (strain Kin4-M).